A 143-amino-acid polypeptide reads, in one-letter code: Small ribosomal subunit protein bS18m (143 aa).

It belongs to the bacterial ribosomal protein bS18 family. Component of the mitochondrial ribosome small subunit (28S) which comprises a 12S rRNA and about 30 distinct proteins.

The protein localises to the mitochondrion. This is Small ribosomal subunit protein bS18m (MRPS18C) from Bos taurus (Bovine).